A 152-amino-acid polypeptide reads, in one-letter code: MIEEEIEVDVDIKTRADKFHKFIRRSQHVPKATHYIKGCDLLEGEWGKVGSILLWKLVFDGEPRVSKDMIEVIDEEKNVIQLRVLEGPLKKEYKSFLKTMKVMSPKHGGPGSVVKWNMKYERIDQNVDHPNRLLQFFVEVTKEIDQYLLSKD.

Belongs to the MLP family.

This Arabidopsis thaliana (Mouse-ear cress) protein is MLP-like protein 165 (MLP165).